A 135-amino-acid polypeptide reads, in one-letter code: Large ribosomal subunit protein uL16c (135 aa).

This sequence belongs to the universal ribosomal protein uL16 family. In terms of assembly, part of the 50S ribosomal subunit.

The protein resides in the plastid. Its subcellular location is the chloroplast. In Ceratophyllum demersum (Rigid hornwort), this protein is Large ribosomal subunit protein uL16c.